The primary structure comprises 386 residues: Patatin group M-2 (386 aa).

Residues 1-23 form the signal peptide; it reads MATTKSFLILFFMILATTSSTCA. The region spanning 32–229 is the PNPLA domain; sequence LSIDGGGIKG…TVGDPALLSL (198 aa). Positions 36-41 match the GXGXXG motif; sequence GGGIKG. The GXSXG signature appears at 75–79; it reads GTSTG. The active-site Nucleophile is Ser-77. A glycan (N-linked (GlcNAc...) asparagine) is linked at Asn-115. Asp-215 functions as the Proton acceptor in the catalytic mechanism. The short motif at 215 to 217 is the DGA/G element; the sequence is DGG. The stretch at 321-384 forms a coiled coil; sequence ENALTGTTTE…DRKKLRANKA (64 aa).

It belongs to the patatin family. Tuber.

It localises to the vacuole. Its function is as follows. Probable lipolytic acyl hydrolase (LAH), an activity which is thought to be involved in the response of tubers to pathogens. This Solanum tuberosum (Potato) protein is Patatin group M-2.